A 1528-amino-acid polypeptide reads, in one-letter code: Zinc finger FYVE domain-containing protein 16 (1528 aa).

A Phosphoserine modification is found at Ser-120. Residues 629–664 (TQAVGGARPKQLLSLPPGTRSSKELNKPDVVDVPES) form a disordered region. Residues 649-658 (SSKELNKPDV) show a composition bias toward basic and acidic residues. The FYVE-type zinc-finger motif lies at 735–793 (DSEAPNCMNCQVKFTFTKRRHHCRACGKVFCGVCCNRKCKLQYLEKEARVCVICYETIN). Cys-741, Cys-744, Cys-757, Cys-760, Cys-765, Cys-768, Cys-785, and Cys-788 together coordinate Zn(2+). Phosphoserine is present on residues Ser-803, Ser-833, Ser-884, and Ser-927. The tract at residues 819–849 (TDQPLQETQTSSTPSPTTLPISALKQPNVEG) is disordered. Over residues 821 to 838 (QPLQETQTSSTPSPTTLP) the composition is skewed to low complexity. Positions 928-949 (PTCHTAPVERLPGNTGTEGLPM) are disordered.

Interacts (via C-terminus) with TOM1 (via C-terminus); interaction is required to target TOM1 to endosomes. Does not interact with TOM1L1 or TOM1L2.

The protein resides in the cytoplasm. It is found in the early endosome membrane. May be involved in regulating membrane trafficking in the endosomal pathway. Overexpression induces endosome aggregation. Required to target TOM1 to endosomes. In Mus musculus (Mouse), this protein is Zinc finger FYVE domain-containing protein 16 (Zfyve16).